The primary structure comprises 824 residues: Silver exporting P-type ATPase (824 aa).

The segment at 89–112 (ASEHHHHHDHHEVSPDKIKQSHRQ) is disordered. Residues 98 to 112 (HHEVSPDKIKQSHRQ) are compositionally biased toward basic and acidic residues. A run of 6 helical transmembrane segments spans residues 167-187 (FWLG…SHLF), 200-220 (TWLQ…PFFA), 234-254 (FTLV…ATVF), 268-288 (LVAI…LGQV), 427-447 (WFVP…SVWG), and 455-475 (GLIA…GLAT). D511 functions as the 4-aspartylphosphate intermediate in the catalytic mechanism. The next 2 membrane-spanning stretches (helical) occupy residues 764–784 (IRQN…VAAG) and 785–805 (LLYP…AMAL).

The protein belongs to the cation transport ATPase (P-type) (TC 3.A.3) family. Type IB subfamily.

It is found in the cell membrane. It carries out the reaction Ag(+)(in) + ATP + H2O = Ag(+)(out) + ADP + phosphate + H(+). Component of the sil cation-efflux system that confers resistance to silver. The polypeptide is Silver exporting P-type ATPase (silP) (Salmonella typhimurium).